We begin with the raw amino-acid sequence, 771 residues long: Endoplasmin homolog (771 aa).

An N-terminal signal peptide occupies residues 1 to 24; the sequence is MANSSLLRVVLVALLLLGSVTVSA. Residues asparagine 63, aspartate 109, and phenylalanine 160 each coordinate ATP. N-linked (GlcNAc...) asparagine glycosylation occurs at asparagine 63. The tract at residues 253–282 is disordered; sequence TAATPEPAAEEGSLDEGAVEEDPDKEGDTQ. Over residues 260–277 the composition is skewed to acidic residues; that stretch reads AAEEGSLDEGAVEEDPDK. 2 N-linked (GlcNAc...) asparagine glycosylation sites follow: asparagine 306 and asparagine 402. A disordered region spans residues 727–771; that stretch reads ADDSLLPPDDAEYTVSDTEAEEEEEQPKVDANADEEAEAVGEDDL. Residues 758-771 show a composition bias toward acidic residues; it reads NADEEAEAVGEDDL. The short motif at 768–771 is the Prevents secretion from ER element; sequence EDDL.

The protein belongs to the heat shock protein 90 family. As to quaternary structure, homotetramer.

Its subcellular location is the endoplasmic reticulum. In terms of biological role, molecular chaperone that functions in the processing and transport of secreted proteins. Required for the synthesis of lipophosphoglycan (LPG), a cell surface glycoconjugate. Necessary for the attachment of the galactosyl residue to the mannose within the phosphoglycan repeats of the nascent LPG chain. Also required for addition of phosphoglycan to acid phosphatase. Not required for normal growth. Has ATPase activity. Binds heparin with micromolar affinity which may facilitate infection of host cells. The protein is Endoplasmin homolog of Leishmania infantum.